The following is a 99-amino-acid chain: MTEETITIDSISNGILNNLLTTLIQDIVARETTQQQLLKTRYPDLRSYYFDPNGSLDINGLQKQQESSQYIHCENCGRDVSANRLAAHLQRCLSRGARR.

An SGF11-type zinc finger spans residues 71-92; the sequence is IHCENCGRDVSANRLAAHLQRC.

It belongs to the SGF11 family. As to quaternary structure, component of the 1.8 MDa SAGA transcription coactivator-HAT complex. SAGA is built of 5 distinct domains with specialized functions. Within the SAGA complex, SUS1, SGF11, SGF73 and UBP8 form an additional subcomplex of SAGA called the DUB module (deubiquitination module). Interacts directly with SGF73, SUS1 and UBP8.

It localises to the nucleus. Its function is as follows. Functions as a component of the transcription regulatory histone acetylation (HAT) complex SAGA. At the promoters, SAGA is required for recruitment of the basal transcription machinery. It influences RNA polymerase II transcriptional activity through different activities such as TBP interaction and promoter selectivity, interaction with transcription activators, and chromatin modification through histone acetylation and deubiquitination. SAGA acetylates nucleosomal histone H3 to some extent (to form H3K9ac, H3K14ac, H3K18ac and H3K23ac). SAGA interacts with DNA via upstream activating sequences (UASs). Involved in transcriptional regulation of a subset of SAGA-regulated genes. Within the SAGA complex, participates in a subcomplex, that specifically deubiquitinates histones H2B. In Saccharomyces cerevisiae (strain YJM789) (Baker's yeast), this protein is SAGA-associated factor 11.